Here is a 488-residue protein sequence, read N- to C-terminus: MIQVLLVTICLAVFPYQGSSIILESGNVNDYEVVYPRKVTALPKGAAQPKYEDAMQYEFKVNGEPVVLHLEKNKELFSEDYSETHYSPDGREITTYPLVEDHCYYHGRIENDADSTASISACNGLKGHFKLQGETYLIEPLKLSDSEAHAVYKYENVEKEDEASKMCGVTETNWESYEPIKKASQLNLPPEQQRFPQTYIELVVVADHRMYTKYDGDKTEISSIIYEIVNTLTQIFRPLHIRVALIGLEIWSSGELSKVTLSADDTLEAFGEWRETVLMNRKRHDNAQLLTGMIFNETIEGRTYKSGMCNPKHSVGIVRDYRTRRHFVANRMAHELGHNLGIDHDRDSCTCGANSCIMSATVSNEPSSQFSDCSLNKYLNYIVRYQSTTRCLHNEPSETDIVSPPFCGNYFKEVGEDCDCGPPANCQNPCCDAATCKLTTGSQCAEGLCCDQCKFTKKGTACRPARGDWNDDTCTGQSADCPRNGLYG.

The signal sequence occupies residues 1 to 20 (MIQVLLVTICLAVFPYQGSS). The propeptide occupies 21 to 191 (IILESGNVND…KASQLNLPPE (171 aa)). The region spanning 198–396 (TYIELVVVAD…STTRCLHNEP (199 aa)) is the Peptidase M12B domain. Positions 201 and 285 each coordinate Ca(2+). The N-linked (GlcNAc...) asparagine glycan is linked to Asn296. 3 disulfides stabilise this stretch: Cys309–Cys391, Cys349–Cys373, and Cys351–Cys356. His334 provides a ligand contact to Zn(2+). Glu335 is an active-site residue. Positions 338 and 344 each coordinate Zn(2+). Ca(2+) contacts are provided by Cys391, Asn394, Asn409, Glu413, Glu416, and Asp419. The Disintegrin domain maps to 404–488 (PPFCGNYFKE…ADCPRNGLYG (85 aa)). Intrachain disulfides connect Cys407–Cys426, Cys418–Cys436, Cys420–Cys431, Cys430–Cys453, Cys444–Cys450, Cys449–Cys474, and Cys462–Cys481. The short motif at 466–468 (RGD) is the Cell attachment site element.

Belongs to the venom metalloproteinase (M12B) family. P-II subfamily. Zn(2+) is required as a cofactor. Expressed by the venom gland.

It localises to the secreted. Inhibits ADP-induced platelet aggregation (probably by binding integrin alpha-IIb/beta-3 (ITGA2B/ITGB3)) and degrades fibrinogen. The protein is Zinc metalloproteinase-disintegrin 8 of Crotalus adamanteus (Eastern diamondback rattlesnake).